The chain runs to 287 residues: Ribosomal RNA small subunit methyltransferase I (287 aa).

It belongs to the methyltransferase superfamily. RsmI family.

The protein resides in the cytoplasm. It carries out the reaction cytidine(1402) in 16S rRNA + S-adenosyl-L-methionine = 2'-O-methylcytidine(1402) in 16S rRNA + S-adenosyl-L-homocysteine + H(+). Catalyzes the 2'-O-methylation of the ribose of cytidine 1402 (C1402) in 16S rRNA. The protein is Ribosomal RNA small subunit methyltransferase I of Streptococcus pyogenes serotype M6 (strain ATCC BAA-946 / MGAS10394).